The chain runs to 336 residues: Protein FPV127 (336 aa).

The interval 1 to 22 (MGGGLVLPTRDPPKEQDTSETA) is disordered.

This sequence belongs to the poxviruses A16/G9/J5 family.

The sequence is that of Protein FPV127 from Vertebrata (FPV).